The sequence spans 427 residues: Diaminobutyrate--2-oxoglutarate transaminase (427 aa).

Lysine 269 carries the post-translational modification N6-(pyridoxal phosphate)lysine.

It belongs to the class-III pyridoxal-phosphate-dependent aminotransferase family. Pyridoxal 5'-phosphate is required as a cofactor.

The enzyme catalyses L-2,4-diaminobutanoate + 2-oxoglutarate = L-aspartate 4-semialdehyde + L-glutamate. Its pathway is amine and polyamine biosynthesis; ectoine biosynthesis; L-ectoine from L-aspartate 4-semialdehyde: step 1/3. Catalyzes reversively the conversion of L-aspartate beta-semialdehyde (ASA) to L-2,4-diaminobutyrate (DABA) by transamination with L-glutamate. This chain is Diaminobutyrate--2-oxoglutarate transaminase (ectB), found in Halalkalibacterium halodurans (strain ATCC BAA-125 / DSM 18197 / FERM 7344 / JCM 9153 / C-125) (Bacillus halodurans).